A 632-amino-acid chain; its full sequence is Threonine--tRNA ligase (632 aa).

Residues 1-61 enclose the TGS domain; sequence MPIITLPDGT…KTDANLAIIT (61 aa). The tract at residues 242-533 is catalytic; the sequence is DHRKIGKIQD…LIEHYEGAYP (292 aa). Residues Cys-333, His-384, and His-510 each contribute to the Zn(2+) site.

This sequence belongs to the class-II aminoacyl-tRNA synthetase family. As to quaternary structure, homodimer. Zn(2+) is required as a cofactor.

Its subcellular location is the cytoplasm. The catalysed reaction is tRNA(Thr) + L-threonine + ATP = L-threonyl-tRNA(Thr) + AMP + diphosphate + H(+). Catalyzes the attachment of threonine to tRNA(Thr) in a two-step reaction: L-threonine is first activated by ATP to form Thr-AMP and then transferred to the acceptor end of tRNA(Thr). Also edits incorrectly charged L-seryl-tRNA(Thr). This is Threonine--tRNA ligase from Ruthia magnifica subsp. Calyptogena magnifica.